A 471-amino-acid polypeptide reads, in one-letter code: Iroquois-class homeodomain protein IRX-2 (471 aa).

The homeobox; TALE-type DNA-binding region spans Leu112–Glu175. Disordered stretches follow at residues Asn176–Pro373 and Ala424–Leu471. Ser186 carries the post-translational modification Phosphoserine. Positions Asp195–Glu209 are enriched in basic and acidic residues. Residues Asp261–Gly273 are compositionally biased toward acidic residues. Residues Pro355–Pro367 are compositionally biased toward low complexity. Positions Val462–Leu471 are enriched in gly residues.

It belongs to the TALE/IRO homeobox family.

The protein resides in the nucleus. The protein is Iroquois-class homeodomain protein IRX-2 (IRX2) of Homo sapiens (Human).